A 397-amino-acid polypeptide reads, in one-letter code: tRNA-specific 2-thiouridylase MnmA (397 aa).

Residues 19–26 and Leu-45 contribute to the ATP site; that span reads AMSGGVDS. The active-site Nucleophile is the Cys-113. Cys-113 and Cys-210 are joined by a disulfide. Gly-137 provides a ligand contact to ATP. An interaction with tRNA region spans residues 160–162; the sequence is RDQ. Cys-210 (cysteine persulfide intermediate) is an active-site residue.

Belongs to the MnmA/TRMU family.

The protein resides in the cytoplasm. It catalyses the reaction S-sulfanyl-L-cysteinyl-[protein] + uridine(34) in tRNA + AH2 + ATP = 2-thiouridine(34) in tRNA + L-cysteinyl-[protein] + A + AMP + diphosphate + H(+). Catalyzes the 2-thiolation of uridine at the wobble position (U34) of tRNA, leading to the formation of s(2)U34. In Bradyrhizobium sp. (strain ORS 278), this protein is tRNA-specific 2-thiouridylase MnmA.